A 393-amino-acid chain; its full sequence is Beta-ureidopropionase (393 aa).

A CN hydrolase domain is found at 72–344 (VRVGLVQNRI…DGLLVTELNL (273 aa)). Residue Glu119 is the Proton acceptor of the active site. Catalysis depends on Lys196, which acts as the Proton donor. Cys233 acts as the Nucleophile in catalysis. Ser378 carries the phosphoserine modification.

It belongs to the carbon-nitrogen hydrolase superfamily. BUP family. In terms of assembly, homodimer, homotetramer, homooctamer; can also form higher homooligomers.

The protein resides in the cytoplasm. It catalyses the reaction 3-(carbamoylamino)propanoate + H2O + 2 H(+) = beta-alanine + NH4(+) + CO2. It carries out the reaction 3-(carbamoylamino)-2-methylpropanoate + H2O + 2 H(+) = (R)-3-amino-2-methylpropanoate + NH4(+) + CO2. The protein operates within amino-acid biosynthesis; beta-alanine biosynthesis. In terms of biological role, catalyzes a late step in pyrimidine degradation. Converts N-carbamoyl-beta-alanine (3-ureidopropanoate) into beta-alanine, ammonia and carbon dioxide. Likewise, converts N-carbamoyl-beta-aminoisobutyrate (3-ureidoisobutyrate) into beta-aminoisobutyrate, ammonia and carbon dioxide. This Mus musculus (Mouse) protein is Beta-ureidopropionase (Upb1).